The primary structure comprises 471 residues: Adenosylhomocysteinase (471 aa).

Substrate contacts are provided by Thr-60, Asp-135, and Glu-196. Position 197–199 (Thr-197–Thr-199) interacts with NAD(+). Substrate contacts are provided by Lys-226 and Asp-230. NAD(+)-binding positions include Asn-231, Gly-260–Gly-265, Glu-283, Asn-318, Ile-339–His-341, and Asn-387.

This sequence belongs to the adenosylhomocysteinase family. The cofactor is NAD(+).

The protein resides in the cytoplasm. The catalysed reaction is S-adenosyl-L-homocysteine + H2O = L-homocysteine + adenosine. It functions in the pathway amino-acid biosynthesis; L-homocysteine biosynthesis; L-homocysteine from S-adenosyl-L-homocysteine: step 1/1. In terms of biological role, may play a key role in the regulation of the intracellular concentration of adenosylhomocysteine. The polypeptide is Adenosylhomocysteinase (Chlorobium phaeovibrioides (strain DSM 265 / 1930) (Prosthecochloris vibrioformis (strain DSM 265))).